Reading from the N-terminus, the 285-residue chain is Acetylglutamate kinase (285 aa).

Substrate-binding positions include 63 to 64, arginine 85, and asparagine 178; that span reads GG.

This sequence belongs to the acetylglutamate kinase family. ArgB subfamily.

It is found in the cytoplasm. It catalyses the reaction N-acetyl-L-glutamate + ATP = N-acetyl-L-glutamyl 5-phosphate + ADP. The protein operates within amino-acid biosynthesis; L-arginine biosynthesis; N(2)-acetyl-L-ornithine from L-glutamate: step 2/4. In terms of biological role, catalyzes the ATP-dependent phosphorylation of N-acetyl-L-glutamate. In Synechococcus sp. (strain CC9311), this protein is Acetylglutamate kinase.